A 427-amino-acid polypeptide reads, in one-letter code: Peptidase B (427 aa).

The Mn(2+) site is built by lysine 195 and aspartate 200. Lysine 207 is an active-site residue. Residues aspartate 218, aspartate 277, and glutamate 279 each coordinate Mn(2+). Arginine 281 is an active-site residue.

Belongs to the peptidase M17 family. As to quaternary structure, homohexamer. It depends on Mn(2+) as a cofactor.

It localises to the cytoplasm. The catalysed reaction is Release of an N-terminal amino acid, Xaa, from a peptide or arylamide. Xaa is preferably Glu or Asp but may be other amino acids, including Leu, Met, His, Cys and Gln.. Functionally, probably plays an important role in intracellular peptide degradation. In Shigella boydii serotype 18 (strain CDC 3083-94 / BS512), this protein is Peptidase B.